Reading from the N-terminus, the 241-residue chain is 1-(5-phosphoribosyl)-5-[(5-phosphoribosylamino)methylideneamino] imidazole-4-carboxamide isomerase (241 aa).

Catalysis depends on Asp8, which acts as the Proton acceptor. Asp130 (proton donor) is an active-site residue.

The protein belongs to the HisA/HisF family.

It localises to the cytoplasm. It carries out the reaction 1-(5-phospho-beta-D-ribosyl)-5-[(5-phospho-beta-D-ribosylamino)methylideneamino]imidazole-4-carboxamide = 5-[(5-phospho-1-deoxy-D-ribulos-1-ylimino)methylamino]-1-(5-phospho-beta-D-ribosyl)imidazole-4-carboxamide. Its pathway is amino-acid biosynthesis; L-histidine biosynthesis; L-histidine from 5-phospho-alpha-D-ribose 1-diphosphate: step 4/9. This chain is 1-(5-phosphoribosyl)-5-[(5-phosphoribosylamino)methylideneamino] imidazole-4-carboxamide isomerase, found in Flavobacterium psychrophilum (strain ATCC 49511 / DSM 21280 / CIP 103535 / JIP02/86).